Consider the following 312-residue polypeptide: Methionyl-tRNA formyltransferase (312 aa).

Position 109–112 (109–112) interacts with (6S)-5,6,7,8-tetrahydrofolate; it reads SLLP.

It belongs to the Fmt family.

The catalysed reaction is L-methionyl-tRNA(fMet) + (6R)-10-formyltetrahydrofolate = N-formyl-L-methionyl-tRNA(fMet) + (6S)-5,6,7,8-tetrahydrofolate + H(+). Attaches a formyl group to the free amino group of methionyl-tRNA(fMet). The formyl group appears to play a dual role in the initiator identity of N-formylmethionyl-tRNA by promoting its recognition by IF2 and preventing the misappropriation of this tRNA by the elongation apparatus. This chain is Methionyl-tRNA formyltransferase, found in Listeria monocytogenes serotype 4a (strain HCC23).